The sequence spans 576 residues: Putative export ATP-binding/permease protein RP696 (576 aa).

The 284-residue stretch at 20 to 303 (LIIVMISLLS…IFELLSEMHL (284 aa)) folds into the ABC transmembrane type-1 domain. The next 6 helical transmembrane spans lie at 21–41 (IIVM…GSIF), 61–81 (ILYI…RSYF), 135–155 (FLSF…LMFF), 158–178 (FKLA…LIKF), 242–262 (ALFF…IVWI), and 277–297 (IISF…IFEL). The ABC transporter domain occupies 336-572 (IEFKNVDFTY…SEIYRNICRE (237 aa)). 371-378 (GRSGAGKS) is an ATP binding site.

It belongs to the ABC transporter superfamily. In terms of assembly, homodimer.

It is found in the cell inner membrane. In terms of biological role, part of an ABC transporter complex. Transmembrane domains (TMD) form a pore in the inner membrane and the ATP-binding domain (NBD) is responsible for energy generation. This chain is Putative export ATP-binding/permease protein RP696, found in Rickettsia prowazekii (strain Madrid E).